A 167-amino-acid polypeptide reads, in one-letter code: Protein archease (167 aa).

Ala-2 is subject to N-acetylalanine. Ca(2+) contacts are provided by Asp-39, Asp-166, and Ile-167.

This sequence belongs to the archease family. In terms of assembly, component of the tRNA-splicing ligase complex.

Functionally, component of the tRNA-splicing ligase complex required to facilitate the enzymatic turnover of catalytic subunit RTCB. Together with DDX1, acts by facilitating the guanylylation of RTCB, a key intermediate step in tRNA ligation. The protein is Protein archease (ZBTB8OS) of Homo sapiens (Human).